The sequence spans 121 residues: Large ribosomal subunit protein bL12 (121 aa).

It belongs to the bacterial ribosomal protein bL12 family. Homodimer. Part of the ribosomal stalk of the 50S ribosomal subunit. Forms a multimeric L10(L12)X complex, where L10 forms an elongated spine to which 2 to 4 L12 dimers bind in a sequential fashion. Binds GTP-bound translation factors.

Its function is as follows. Forms part of the ribosomal stalk which helps the ribosome interact with GTP-bound translation factors. Is thus essential for accurate translation. The polypeptide is Large ribosomal subunit protein bL12 (Leuconostoc citreum (strain KM20)).